A 403-amino-acid chain; its full sequence is S-adenosylmethionine synthase (403 aa).

Histidine 17 provides a ligand contact to ATP. Aspartate 19 serves as a coordination point for Mg(2+). Residue glutamate 45 coordinates K(+). L-methionine is bound by residues glutamate 58 and glutamine 104. The interval 104-114 is flexible loop; the sequence is QSPDIAQGVDT. Residues 179–181, 250–251, aspartate 259, 265–266, alanine 282, and lysine 286 each bind ATP; these read DGK, KF, and RK. Aspartate 259 is a binding site for L-methionine. Lysine 290 serves as a coordination point for L-methionine.

It belongs to the AdoMet synthase family. As to quaternary structure, homotetramer; dimer of dimers. Requires Mg(2+) as cofactor. The cofactor is K(+).

It is found in the cytoplasm. The enzyme catalyses L-methionine + ATP + H2O = S-adenosyl-L-methionine + phosphate + diphosphate. It functions in the pathway amino-acid biosynthesis; S-adenosyl-L-methionine biosynthesis; S-adenosyl-L-methionine from L-methionine: step 1/1. Catalyzes the formation of S-adenosylmethionine (AdoMet) from methionine and ATP. The overall synthetic reaction is composed of two sequential steps, AdoMet formation and the subsequent tripolyphosphate hydrolysis which occurs prior to release of AdoMet from the enzyme. The polypeptide is S-adenosylmethionine synthase (Mycobacterium bovis (strain BCG / Pasteur 1173P2)).